Reading from the N-terminus, the 266-residue chain is Beta-lactamase OXA-11 (266 aa).

An N-terminal signal peptide occupies residues Met-1–Gly-20. Catalysis depends on Ser-67, which acts as the Acyl-ester intermediate. N6-carboxylysine is present on Lys-70. Lys-205–Gly-207 serves as a coordination point for substrate.

This sequence belongs to the class-D beta-lactamase family.

It catalyses the reaction a beta-lactam + H2O = a substituted beta-amino acid. Functionally, hydrolyzes carbenicillin, oxacillin and cephalosporin. Does not hydrolyze cefoxitin or carbapenems. This is Beta-lactamase OXA-11 (bla) from Pseudomonas aeruginosa.